We begin with the raw amino-acid sequence, 349 residues long: Protein RecA (349 aa).

65 to 72 provides a ligand contact to ATP; it reads GPESSGKT.

It belongs to the RecA family.

Its subcellular location is the cytoplasm. Its function is as follows. Can catalyze the hydrolysis of ATP in the presence of single-stranded DNA, the ATP-dependent uptake of single-stranded DNA by duplex DNA, and the ATP-dependent hybridization of homologous single-stranded DNAs. It interacts with LexA causing its activation and leading to its autocatalytic cleavage. This is Protein RecA from Azotobacter vinelandii (strain DJ / ATCC BAA-1303).